Here is a 187-residue protein sequence, read N- to C-terminus: Ribosome-recycling factor (187 aa).

The protein belongs to the RRF family.

Its subcellular location is the cytoplasm. Functionally, responsible for the release of ribosomes from messenger RNA at the termination of protein biosynthesis. May increase the efficiency of translation by recycling ribosomes from one round of translation to another. This is Ribosome-recycling factor from Parabacteroides distasonis (strain ATCC 8503 / DSM 20701 / CIP 104284 / JCM 5825 / NCTC 11152).